The sequence spans 42 residues: Alpha-conotoxin VnIB (42 aa).

A propeptide spanning residues 1-22 is cleaved from the precursor; that stretch reads ASDGRNAAADDKASDPIALTVR. Disulfide bonds link cysteine 25–cysteine 31 and cysteine 26–cysteine 38. Position 39 is a glycine amide (glycine 39).

Belongs to the conotoxin A superfamily. In terms of tissue distribution, expressed by the venom duct.

The protein localises to the secreted. Functionally, alpha-conotoxins act on postsynaptic membranes, they bind to the nicotinic acetylcholine receptors (nAChR) and thus inhibit them. This toxin potently and selectively inhibits human and rat alpha-6-beta-4/CHRNA6-CHRNB4 nAChR (IC(50)=12 nM on rat nAChR). It exhibits rapid binding and unbinding at this receptor. It also shows activity on rat alpha-6-beta-4/CHRNA6-CHRNB4 (IC(50)=12 nM), human alpha-6/alpha-3-beta-4 (CHRNA6/CHRNA3-CHRNB4) (IC(50)=5.3 nM), rat alpha-6/alpha-3-beta-4 (CHRNA6/CHRNA3-CHRNB4) (IC(50)=18 nM), rat alpha-3-beta-4/CHRNA3-CHRNB4 (IC(50)=320 nM), and rat alpha-6/alpha-3-beta-2-beta-3 (CHRNA6/CHRNA3-CHRNB2-CHRNB3) (IC(50)=4 uM). The protein is Alpha-conotoxin VnIB of Conus ventricosus (Mediterranean cone).